Here is a 440-residue protein sequence, read N- to C-terminus: C4-dicarboxylate transport protein (440 aa).

9 consecutive transmembrane segments (helical) span residues 15–35 (VLVAITIGILLGHYYPETGVA), 46–66 (LIKMVIAPIIFCTVVSGIAGM), 78–98 (YALLYFEIVSTIALIIGLVVV), 146–166 (AFANGDILQVLMFSVLFGFAL), 190–210 (IINMIMKLAPIGAFGAMAFTI), 224–244 (LMACFYITCLLFVLVVLGGIC), 291–311 (VVGLVIPTGYSFNLDGTSIYL), 332–352 (ITLLLVLLVASKGAAGVTGSG), and 354–374 (IVLAATLSAVGHLPVAGLALI). A disordered region spans residues 420–440 (GAPLVDTRPTDDLGVAEGPAR).

This sequence belongs to the dicarboxylate/amino acid:cation symporter (DAACS) (TC 2.A.23) family.

It is found in the cell inner membrane. In terms of biological role, responsible for the transport of dicarboxylates such as succinate, fumarate, and malate from the periplasm across the membrane. The protein is C4-dicarboxylate transport protein of Pseudomonas putida (strain ATCC 700007 / DSM 6899 / JCM 31910 / BCRC 17059 / LMG 24140 / F1).